A 148-amino-acid polypeptide reads, in one-letter code: UPF0178 protein DP1304 (148 aa).

Belongs to the UPF0178 family.

The sequence is that of UPF0178 protein DP1304 from Desulfotalea psychrophila (strain LSv54 / DSM 12343).